The following is a 102-amino-acid chain: Complement inhibitor RaCI3 (102 aa).

The first 24 residues, 1–24 (MAALNGLVLLLLTISAMFISECYS), serve as a signal peptide directing secretion. Cystine bridges form between cysteine 37–cysteine 61, cysteine 42–cysteine 63, and cysteine 57–cysteine 78.

It belongs to the RaCI family. In terms of tissue distribution, expressed in salivary glands.

It localises to the secreted. In terms of biological role, complement inhibitor. Prevents complement-mediated C5 activation by binding to C5. Binds C5 at a different binding site than the other tick complement inhibitors OmCI and CirpT1, and the drug eculizumab. Inhibits complement in human and guinea pig but not in other species tested (rabbit, rat, mouse, and pig). The chain is Complement inhibitor RaCI3 from Dermacentor andersoni (Rocky mountain wood tick).